The primary structure comprises 140 residues: uncharacterized protein (140 aa).

Transmembrane regions (helical) follow at residues 20 to 42 (ILYYGGLIGIIFMAITFAIYVSG), 88 to 110 (FVALAFLAMITIICYLAIIPVLL), and 115 to 137 (IIYTILAIAEVIILLLAASGLLQ).

The protein resides in the cell membrane. This is an uncharacterized protein from Archaeoglobus fulgidus (strain ATCC 49558 / DSM 4304 / JCM 9628 / NBRC 100126 / VC-16).